The sequence spans 61 residues: Large ribosomal subunit protein bL32 (61 aa).

Over residues 1–16 (MAVPKRKTSPSKRGMR) the composition is skewed to basic residues. The segment at 1-41 (MAVPKRKTSPSKRGMRRSADALKASTYVEDKNSGELRRPHH) is disordered. A compositionally biased stretch (basic and acidic residues) spans 28–41 (VEDKNSGELRRPHH).

It belongs to the bacterial ribosomal protein bL32 family.

This Rhizobium rhizogenes (strain K84 / ATCC BAA-868) (Agrobacterium radiobacter) protein is Large ribosomal subunit protein bL32.